Consider the following 749-residue polypeptide: RNA-binding protein 5-B (749 aa).

Residues 1 to 88 (MGSDKRVSRS…YHSDGDYMDH (88 aa)) form a disordered region. Residues 102-182 (KTIMLRGLPI…KTIAMHYSNP (81 aa)) form the RRM 1 domain. The RanBP2-type zinc finger occupies 185–214 (KFEDWLCNKCGLYNFRRRLKCFRCGAAKAE). The RRM 2 domain maps to 241-325 (SAIILRNIGP…KTIGVDFAKS (85 aa)). Disordered stretches follow at residues 425 to 471 (QMYQ…SVPD), 520 to 558 (PAAD…AQQI), 570 to 595 (NKQK…ESAA), and 626 to 680 (TEEE…NSNI). Residues 429–460 (QPGSPTQSGTSTAASTTPASTTSTEEATTPTA) are compositionally biased toward low complexity. Basic and acidic residues-rich tracts occupy residues 585–594 (SRDEERKESA) and 627–648 (EEEK…EKYG). In terms of domain architecture, G-patch spans 677–723 (NSNIGNKMLQAMGWKEGSGLGRKSQGITAPIQAQVRMRGAGLGAKGS).

It belongs to the RBM5/RBM10 family. As to quaternary structure, component of the spliceosome A complex (also known as the prespliceosome). Appears to dissociate from the spliceosome upon formation of the spliceosome B complex (also known as the precatalytic spliceosome), in which the heterotrimeric U4/U6.U5 snRNPs are bound.

It localises to the nucleus. Its function is as follows. Component of the spliceosome A complex. Regulates alternative splicing of a number of mRNAs. May modulate splice site pairing after recruitment of the U1 and U2 snRNPs to the 5' and 3' splice sites of the intron. The chain is RNA-binding protein 5-B (rbm5-b) from Xenopus laevis (African clawed frog).